We begin with the raw amino-acid sequence, 416 residues long: MLSLILFFPSFAFAATPVTPYYGPGHITFDWCGFGDSRSDCTNPQSPMSLDIPQQLCPKFSSKSSSSMFLSLHWNNHSSFVSYDYFNCGVEKVFYEGVNFSPRKQYSCWDEGVDGWIELKTRFYTKLYQMATTSRCIKLIQLQAPSSLPTLQAGVCRTNKQLPDNPRLALLSDTVPTSVQFVLPGSSGTTICTKHLVPFCYLNHGCFTTGGSCLPFGVSYVSDSFYYGYYDATPQIGSTESHDYVCDYLFMEPGTYNASTVGKFLVYPTKSYCMDTMNITVPVQAVQSIWSEQYASDDAIGQACKAPYCIFYNKTTPYTVTNGSDANHGDDEVRMMMQGLLRNSSCISPQGSTPLALYSTEMIYEPNYGSCPQFYKLFDTSGNENIDVISSSYFVATWVLLVVVVILIFVIISFFC.

The first 14 residues, 1–14 (MLSLILFFPSFAFA), serve as a signal peptide directing secretion. Residues 4–121 (LILFFPSFAF…GVDGWIELKT (118 aa)) are esterase domain first part. Topologically, residues 15–393 (ATPVTPYYGP…ENIDVISSSY (379 aa)) are virion surface. Ser-37 functions as the Nucleophile in the catalytic mechanism. Cys-41 and Cys-57 form a disulfide bridge. Residue Asn-76 is glycosylated (N-linked (GlcNAc...) asparagine; by host). Disulfide bonds link Cys-88–Cys-136, Cys-200–Cys-246, and Cys-206–Cys-213. The receptor binding stretch occupies residues 122-263 (RFYTKLYQMA…GTYNASTVGK (142 aa)). N-linked (GlcNAc...) asparagine; by host glycosylation is found at Asn-257 and Asn-278. The segment at 264 to 379 (FLVYPTKSYC…SCPQFYKLFD (116 aa)) is esterase domain second part. Cys-304 and Cys-309 are oxidised to a cystine. Asn-313 and Asn-322 each carry an N-linked (GlcNAc...) asparagine; by host glycan. Catalysis depends on charge relay system residues Asp-325 and His-328. The N-linked (GlcNAc...) asparagine; by host glycan is linked to Asn-343. A disulfide bridge connects residues Cys-346 and Cys-371. The helical transmembrane segment at 394-414 (FVATWVLLVVVVILIFVIISF) threads the bilayer. The Intravirion portion of the chain corresponds to 415–416 (FC).

The protein belongs to the influenza type C/coronaviruses hemagglutinin-esterase family.

The protein localises to the virion membrane. It localises to the host cell membrane. The catalysed reaction is N-acetyl-9-O-acetylneuraminate + H2O = N-acetylneuraminate + acetate + H(+). It carries out the reaction N-acetyl-4-O-acetylneuraminate + H2O = N-acetylneuraminate + acetate + H(+). In terms of biological role, structural protein that makes short spikes at the surface of the virus. Contains receptor binding and receptor-destroying activities. Mediates de-O-acetylation of N-acetyl-9-di-O-acetylneuraminic acid, which is probably the receptor determinant recognized by the virus on the surface of erythrocytes and susceptible cells. Also hydrolyzes 5-N-acetyl-4-O-acetylneuraminic acid and N-acetyl-9-O-acetylneuraminic acid, but displays a substrate preference for N-acetyl-9-di-O-acetylneuraminic acid. This receptor-destroying activity is important for virus release as it probably helps preventing self-aggregation and ensures the efficient spread of the progeny virus from cell to cell. May serve as a secondary viral attachment protein for initiating infection, the spike protein being the major one. Seems to be a 'luxury' protein that is not absolutely necessary for virus infection in culture. However, its presence in the virus may alter its pathogenicity. May become a target for both the humoral and the cellular branches of the immune system. In Breda virus 1 (BRV-1), this protein is Hemagglutinin-esterase (HE).